Here is a 207-residue protein sequence, read N- to C-terminus: Protein lin-7 homolog B (207 aa).

The Kinase interacting site signature appears at 1 to 13 (MAALVEPLGLERD). The L27 domain maps to 10-65 (LERDVSRAVELLERLQRSGELPPQKLQALQRVLQSRFCSAIREVYEQLYDTLDITG). A PDZ domain is found at 93 to 175 (VVELPKTDEG…SVKLVVRYTP (83 aa)). Residues 187–207 (KMRSARRRQQHQSYSSLESRG) are disordered. Residues 197–207 (HQSYSSLESRG) are compositionally biased toward polar residues.

This sequence belongs to the lin-7 family. In terms of assembly, forms a complex with CASK and CASKIN1. Component of the brain-specific heterotrimeric complex (LIN-10-LIN-2-LIN-7 complex) composed of at least APBA1, CASK, and LIN7, which associates with the motor protein KIF17 to transport vesicles along microtubules. Forms a heterotrimeric complex composed of MMP5, LIN7B and PATJ; the N-terminal L27 domain of PALS1 interacts with the L27 domain of PATJ and the C-terminal L27 domain of PALS1 interacts with the L27 domain of LIN7B. Forms a heterotrimeric complex with DLG1 and CASK via their L27 domains. Interacts with DLG4 and GRIN2B as well as CDH1 and CTNNB1, the channels KCNJ12/Kir2.2, KCNJ4/Kir2.3 and probably KCNJ2/Kir2.1 and SLC6A12/BGT-1 via its PDZ domain. The association of LIN7A with cadherin and beta-catenin is calcium-dependent, occurs at synaptic junctions and requires the actin cytoskeleton. Interacts with EGFR, ERBB2, ERBB3 and ERBB4 with both PDZ and KID domains. Associates with KIF17 via APBA1. Interacts with ASIC3. Interacts with TOPK. Interacts with RTKN. Interacts with APBA1. Interacts with MPP7. Interacts with DLG2. Interacts with DLG3.

The protein localises to the cell membrane. It is found in the basolateral cell membrane. Its subcellular location is the cell junction. The protein resides in the postsynaptic density membrane. It localises to the tight junction. Its function is as follows. Plays a role in establishing and maintaining the asymmetric distribution of channels and receptors at the plasma membrane of polarized cells. Forms membrane-associated multiprotein complexes that may regulate delivery and recycling of proteins to the correct membrane domains. The tripartite complex composed of LIN7 (LIN7A, LIN7B or LIN7C), CASK and APBA1 associates with the motor protein KIF17 to transport vesicles containing N-methyl-D-aspartate (NMDA) receptor subunit NR2B along microtubules. This complex may have the potential to couple synaptic vesicle exocytosis to cell adhesion in brain. Ensures the proper localization of GRIN2B (subunit 2B of the NMDA receptor) to neuronal postsynaptic density and may function in localizing synaptic vesicles at synapses where it is recruited by beta-catenin and cadherin. Required to localize Kir2 channels, GABA transporter (SLC6A12) and EGFR/ERBB1, ERBB2, ERBB3 and ERBB4 to the basolateral membrane of epithelial cells. May increase the amplitude of ASIC3 acid-evoked currents by stabilizing the channel at the cell surface. The polypeptide is Protein lin-7 homolog B (LIN7B) (Homo sapiens (Human)).